Reading from the N-terminus, the 84-residue chain is Small ribosomal subunit protein uS17 (84 aa).

It belongs to the universal ribosomal protein uS17 family. In terms of assembly, part of the 30S ribosomal subunit.

In terms of biological role, one of the primary rRNA binding proteins, it binds specifically to the 5'-end of 16S ribosomal RNA. The polypeptide is Small ribosomal subunit protein uS17 (Moorella thermoacetica (strain ATCC 39073 / JCM 9320)).